The sequence spans 317 residues: Ribosomal protein L11 methyltransferase (317 aa).

4 residues coordinate S-adenosyl-L-methionine: T158, G179, D201, and N244.

Belongs to the methyltransferase superfamily. PrmA family.

The protein localises to the cytoplasm. The enzyme catalyses L-lysyl-[protein] + 3 S-adenosyl-L-methionine = N(6),N(6),N(6)-trimethyl-L-lysyl-[protein] + 3 S-adenosyl-L-homocysteine + 3 H(+). Methylates ribosomal protein L11. This is Ribosomal protein L11 methyltransferase from Streptococcus pyogenes serotype M3 (strain ATCC BAA-595 / MGAS315).